Here is a 103-residue protein sequence, read N- to C-terminus: Spherulin-3A (103 aa).

The N-terminal arm stretch occupies residues 1–13 (MSVCKGVSGNPAK). 2 Beta/gamma crystallin 'Greek key' domains span residues 14–55 (GEVF…KVGP) and 57–99 (TKAF…IVAT).

This sequence belongs to the beta/gamma-crystallin family.

It is found in the cytoplasm. Structural protein. The chain is Spherulin-3A from Physarum polycephalum (Slime mold).